We begin with the raw amino-acid sequence, 518 residues long: MATLIRSKLSNVATSVSNKSQAKVSGMFARMGFQAATDEEALGFAHCDDLDMEHRQGLQMDILKTEVPSGDPTAEGDSHYQRDGTGPPSSASKDEGLCSELSSYGKPKITAWEAGWNVTNAIQGMFVLGLPYAILHGGYLGLFLIIFAAVVCCYTGKILIACLYEENEDGETVRVRDSYVDIANACCAPRFPKLGGRVVNVAQIIELVMTCILYVVVSGNLMYNSFPSLPISQKSWSIIATAMLLPCAFLKNLKAVSKFSLLCTLAHFVINVLVIAYCLSRARDWAWDKVKFYIDVKKFPISIGIIVFSYTSQIFLPSLEGNMQSPKEFHCMMNWTHIAACILKGLFALVAYLTWADETKEVITDNLPSTIRAVVNLFLVAKALLSYPLPFFAAVEVLEKSLFQEGARAFFPNCYGGDGRLKSWGLTLRCALVVFTLLMAIYVPHFALLMGLTGSLTGAGLCFLLPSLFHLKLLWRKLQWHQVFFDVSIFVIGSICSVSGFVHSLEGLIEAFRFNIED.

Residues 1–125 are Cytoplasmic-facing; the sequence is MATLIRSKLS…WNVTNAIQGM (125 aa). Residues 66 to 98 form a disordered region; it reads EVPSGDPTAEGDSHYQRDGTGPPSSASKDEGLC. A helical transmembrane segment spans residues 126–146; that stretch reads FVLGLPYAILHGGYLGLFLII. The Lumenal, vesicle portion of the chain corresponds to 147–197; it reads FAAVVCCYTGKILIACLYEENEDGETVRVRDSYVDIANACCAPRFPKLGGR. A helical membrane pass occupies residues 198 to 218; it reads VVNVAQIIELVMTCILYVVVS. The Cytoplasmic portion of the chain corresponds to 219–258; the sequence is GNLMYNSFPSLPISQKSWSIIATAMLLPCAFLKNLKAVSK. Residues 259 to 279 form a helical membrane-spanning segment; the sequence is FSLLCTLAHFVINVLVIAYCL. The Lumenal, vesicle segment spans residues 280–298; sequence SRARDWAWDKVKFYIDVKK. Residues 299–319 form a helical membrane-spanning segment; sequence FPISIGIIVFSYTSQIFLPSL. Residues 320–334 are Cytoplasmic-facing; sequence EGNMQSPKEFHCMMN. The chain crosses the membrane as a helical span at residues 335–355; sequence WTHIAACILKGLFALVAYLTW. Topologically, residues 356–376 are lumenal, vesicle; it reads ADETKEVITDNLPSTIRAVVN. The helical transmembrane segment at 377–397 threads the bilayer; sequence LFLVAKALLSYPLPFFAAVEV. Residues 398–431 are Cytoplasmic-facing; sequence LEKSLFQEGARAFFPNCYGGDGRLKSWGLTLRCA. A helical membrane pass occupies residues 432-452; that stretch reads LVVFTLLMAIYVPHFALLMGL. Topologically, residues 453–454 are lumenal, vesicle; sequence TG. Residues 455-475 traverse the membrane as a helical segment; the sequence is SLTGAGLCFLLPSLFHLKLLW. The Cytoplasmic portion of the chain corresponds to 476–482; sequence RKLQWHQ. The chain crosses the membrane as a helical span at residues 483 to 503; the sequence is VFFDVSIFVIGSICSVSGFVH. Topologically, residues 504-518 are lumenal, vesicle; that stretch reads SLEGLIEAFRFNIED.

The protein belongs to the amino acid/polyamine transporter 2 family.

The protein resides in the cytoplasmic vesicle membrane. It localises to the presynapse. It catalyses the reaction 4-aminobutanoate(out) + n H(+)(in) = 4-aminobutanoate(in) + n H(+)(out). The enzyme catalyses glycine(out) + n H(+)(in) = glycine(in) + n H(+)(out). The catalysed reaction is beta-alanine(out) + n H(+)(in) = beta-alanine(in) + n H(+)(out). In terms of biological role, antiporter that exchanges vesicular protons for cytosolic 4-aminobutanoate or to a lesser extend glycine, thus allowing their secretion from nerve terminals. The transport is equally dependent on the chemical and electrical components of the proton gradient. May also transport beta-alanine. Acidification of GABAergic synaptic vesicles is a prerequisite for 4-aminobutanoate uptake. The protein is Vesicular inhibitory amino acid transporter of Xenopus tropicalis (Western clawed frog).